The following is a 97-amino-acid chain: MEEISLANLDTNKLEAIAQEIYVDLIEDSCLGFCFEVHRAVKCGYFYLEFADTGSVKDFGIQPVEDKGACRLPLCSLPGDPGDGPQTELQRSPPEFQ.

The interval 76-97 (SLPGDPGDGPQTELQRSPPEFQ) is disordered. S92 is subject to Phosphoserine.

It belongs to the SGF11 family. As to quaternary structure, interacts strongly with ENY2. Interacts weakly with USP22.

The protein resides in the cytoplasm. In terms of biological role, by binding to ENY2, interferes with the nuclear functions of the deubiquitinase (DUB) module of the SAGA complex which consists of ENY2, ATXN7, ATXN7L3 and the histone deubiquitinating component USP22. Affects USP22 DUB activity toward histones indirectly by changing the subcellular distribution of ENY2 and altering ENY2 availability for ATXN7L3 interaction. Regulates H2B monoubiquitination (H2Bub1) levels through cytoplasmic sequestration of ENY2 resulting in loss of nuclear ENY2-ATXN7L3 association which destabilizes ATXN7L3. Affects protein expression levels of ENY2 and ATXN7L3. The protein is Ataxin-7-like protein 3B (Atxn7l3b) of Mus musculus (Mouse).